We begin with the raw amino-acid sequence, 706 residues long: Axin-related protein (706 aa).

The RGS domain occupies 72–191 (SLNLLLDDQD…LQSDICKEYA (120 aa)). Disordered regions lie at residues 278 to 298 (MTDG…REIH), 400 to 482 (TPAN…GTSA), and 585 to 605 (STTL…GFST). The span at 402–412 (ANLSPRSQSPF) shows a compositional bias: polar residues. The segment covering 453–462 (RSSVSSQLPR) has biased composition (low complexity). Positions 624 to 706 (GQGLAIVYYF…KIICKVERAC (83 aa)) constitute a DIX domain.

As to quaternary structure, interacts with dvl2/dsh via DIX domains in both proteins. Forms a complex with ctnnb1/beta-catenin and gsk3b. Also forms heterodimers with mouse Axin1.

The protein localises to the cytoplasm. Its subcellular location is the cytoplasmic vesicle. In terms of biological role, regulates the wnt signaling pathway by interacting with dvl2/dsh, which displaces gsk3b from the axnr-gsk3b complex and thus prevents degradation of ctnnb1/beta-catenin. This chain is Axin-related protein, found in Xenopus laevis (African clawed frog).